The primary structure comprises 801 residues: Lon protease 2 (801 aa).

The Lon N-terminal domain occupies 14-209 (LPMLPVRDIV…LVNEILAAEL (196 aa)). ATP is bound at residue 361-368 (GPPGVGKT). A Lon proteolytic domain is found at 597 to 778 (DSQVGVVQGL…DEVFAVAFDK (182 aa)). Residues serine 684 and lysine 727 contribute to the active site. The segment covering 780-791 (AKGQEKKPAAKK) has biased composition (basic and acidic residues). A disordered region spans residues 780–801 (AKGQEKKPAAKKDPKKTKSLAA). Positions 792-801 (DPKKTKSLAA) are enriched in basic residues.

The protein belongs to the peptidase S16 family. Homohexamer. Organized in a ring with a central cavity.

It is found in the cytoplasm. It carries out the reaction Hydrolysis of proteins in presence of ATP.. Functionally, ATP-dependent serine protease that mediates the selective degradation of mutant and abnormal proteins as well as certain short-lived regulatory proteins. Required for cellular homeostasis and for survival from DNA damage and developmental changes induced by stress. Degrades polypeptides processively to yield small peptide fragments that are 5 to 10 amino acids long. Binds to DNA in a double-stranded, site-specific manner. In Bdellovibrio bacteriovorus (strain ATCC 15356 / DSM 50701 / NCIMB 9529 / HD100), this protein is Lon protease 2.